The chain runs to 907 residues: Glutamate receptor 1 (907 aa).

The N-terminal stretch at 1–18 (MPYIFAFFCTGFLGAVVG) is a signal peptide. At 19–536 (ANFPNNIQIG…GVFSFLDPLA (518 aa)) the chain is on the extracellular side. N-linked (GlcNAc...) asparagine glycans are attached at residues Asn-63, Asn-249, Asn-257, Asn-363, Asn-401, and Asn-406. A disulfide bridge connects residues Cys-75 and Cys-323. L-glutamate contacts are provided by Pro-492, Thr-494, and Arg-499. The chain crosses the membrane as a helical span at residues 537–557 (YEIWMCIVFAYIGVSVVLFLV). Residues 558–584 (SRFSPYEWHSEEFEEGRDQTTSDQSNE) lie on the Cytoplasmic side of the membrane. Residues 585–600 (FGIFNSLWFSLGAFMQ) constitute an intramembrane region (helical; Pore-forming). The stretch at 601 to 603 (QGC) is an intramembrane region. Cys-603 carries S-palmitoyl cysteine lipidation. Residues 604–609 (DISPRS) lie on the Cytoplasmic side of the membrane. Residues 610 to 630 (LSGRIVGGVWWFFTLIIISSY) form a helical membrane-spanning segment. The Extracellular segment spans residues 631–805 (TANLAAFLTV…DKTSALSLSN (175 aa)). Ser-645 bears the Phosphoserine mark. L-glutamate contacts are provided by Ser-668 and Thr-669. A Phosphoserine modification is found at Ser-710. Glu-719 serves as a coordination point for L-glutamate. An intrachain disulfide couples Cys-732 to Cys-787. A helical membrane pass occupies residues 806–826 (VAGVFYILIGGLGLAMLVALI). At 827 to 907 (EFCYKSRSES…SGMPLGATGL (81 aa)) the chain is on the cytoplasmic side. Cys-829 carries S-palmitoyl cysteine lipidation. Phosphoserine occurs at positions 849 and 863. The tract at residues 857–881 (STLPRNSGAGASGGSGSGENGRVVS) is disordered. Positions 866 to 875 (GASGGSGSGE) are enriched in gly residues. The PDZ-binding signature appears at 904-907 (ATGL).

It belongs to the glutamate-gated ion channel (TC 1.A.10.1) family. GRIA1 subfamily. Homotetramer or heterotetramer of pore-forming glutamate receptor subunits. Heteromeric assembly can be the result of both receptor subtype and flip or flop form and according the composition, one partner can be dominant with respect to the fast desensitizing current component, whereas the other can determine the steady-state component. Tetramers may be formed by the dimerization of dimers. Found in a complex with GRIA2, GRIA3, GRIA4, CNIH2, CNIH3, CACNG2, CACNG3, CACNG4, CACNG5, CACNG7 and CACNG8. Interacts with HIP1 and RASGRF2. Interacts with SYNDIG1 and GRIA2. Interacts with DLG1 (via C-terminus). Interacts with LRFN1. Interacts with PRKG2. Interacts with CNIH2 and CACNG2. Interacts with CACNG5; this interaction modulates the gating. Interacts (via C-terminus) with PDLIM4 (via LIM domain); this interaction as well as the interaction of PDLIM4 with alpha-actinin is required for their colocalization in early endosomes. Interacts with SNX27 (via PDZ domain); the interaction is required for recycling to the plasma membrane when endocytosed and prevent degradation in lysosomes. Interacts (via PDZ-binding motif) with SHANK3 (via PDZ domain). Interacts with CACNG3; associates GRIA1 with the adapter protein complex 4 (AP-4) to target GRIA1 to the somatodendritic compartment of neurons. Interacts with CACNG2; this interaction mediates traffick to the plasma membrane and modulation of desensitization. Interacts with CNIH2 and CNIH3; this interaction promotes expression at the plasma membrane and extensively modulates their gating properties by slowing deactivation and desensitization kinetics. Found in a complex with GRIA2, GRIA3, GRIA4, DLG4, CACNG8 and CNIH2. In terms of processing, phosphorylated at Ser-645. Phosphorylated at Ser-710 by PKC. Phosphorylated at Ser-849 by PKC, PKA and CAMK2. Phosphorylated at Ser-863 by PKC, PKA and PRKG2. Phosphorylation of Ser-863 is reduced by induction of long-term depression and increased by induction of long-term potentiation. Palmitoylated. Depalmitoylated by CPT1C and upon L-glutamate stimulation. ZDHHC3/GODZ specifically palmitoylates Cys-603, which leads to Golgi retention and decreased cell surface expression. In contrast, Cys-829 palmitoylation does not affect cell surface expression but regulates stimulation-dependent endocytosis. Expressed in the outer plexiform layer of the retina of the eye (at protein level). Expressed in the forebrain and hippocampus (at protein level).

Its subcellular location is the cell membrane. The protein localises to the endoplasmic reticulum membrane. The protein resides in the postsynaptic cell membrane. It is found in the postsynaptic density membrane. It localises to the cell projection. Its subcellular location is the dendrite. The protein localises to the dendritic spine. The protein resides in the early endosome membrane. It is found in the recycling endosome membrane. It localises to the presynapse. Its subcellular location is the synapse. The catalysed reaction is Ca(2+)(in) = Ca(2+)(out). It carries out the reaction Na(+)(in) = Na(+)(out). It catalyses the reaction Mg(2+)(in) = Mg(2+)(out). The enzyme catalyses Li(+)(in) = Li(+)(out). The catalysed reaction is K(+)(in) = K(+)(out). It carries out the reaction Sr(2+)(in) = Sr(2+)(out). Functionally, ionotropic glutamate receptor that functions as a ligand-gated cation channel, gated by L-glutamate and glutamatergic agonists such as alpha-amino-3-hydroxy-5-methyl-4-isoxazolepropionic acid (AMPA), quisqualic acid, and kainic acid. L-glutamate acts as an excitatory neurotransmitter at many synapses in the central nervous system. Binding of the excitatory neurotransmitter L-glutamate induces a conformation change, leading to the opening of the cation channel, and thereby converts the chemical signal to an electrical impulse upon entry of monovalent and divalent cations such as sodium and calcium. The receptor then desensitizes rapidly and enters in a transient inactive state, characterized by the presence of bound agonist. In the presence of CACNG2 or CACNG4 or CACNG7 or CACNG8, shows resensitization which is characterized by a delayed accumulation of current flux upon continued application of L-glutamate. Calcium (Ca(2+)) permeability depends on subunits composition and, heteromeric channels containing edited GRIA2 subunit are calcium-impermeable. Also permeable to other divalents cations such as strontium(2+) and magnesium(2+) and monovalent cations such as potassium(1+) and lithium(1+). This chain is Glutamate receptor 1, found in Mus musculus (Mouse).